The chain runs to 364 residues: MAMENQVLTPHVYWAQRHRELYLRVELSDVQNPAISTTENVLHFKAQGHGAKGDNVYEFHLEFLDLVKPEPVYKLTQRQVNITVQKKVSQWWERLTKQEKRPLFLAPDFDRWLDESDAEMELRAKEEERLNKLRLESEGSPETLTNLRKGYLFMYNLVQFLGFSWIFVNLTVRFCILGKESFYDTFHTVADMMYFCQMLAVVETINAAIGVTTSPVLPSLIQLLGRNFILFIIFGTMEEMQNKAVVFFVFYLWSAIEIFRYSFYMLTCIDMDWEVLTWLRYTLWIPLYPLGCLAEAVSVVQSIPIFNETGRFSFTLPYPVKIKVRFSFFLQIYLIMIFLGLYINFRHLYKQRRRRYGQKKKKIH.

Residues 1–151 (MAMENQVLTP…ETLTNLRKGY (151 aa)) lie on the Cytoplasmic side of the membrane. Residues 7-96 (VLTPHVYWAQ…KVSQWWERLT (90 aa)) form the CS domain. Threonine 9 bears the Phosphothreonine mark. Residues 113 to 138 (LDESDAEMELRAKEEERLNKLRLESE) are a coiled coil. A phosphoserine mark is found at serine 116 and serine 137. The helical transmembrane segment at 152 to 172 (LFMYNLVQFLGFSWIFVNLTV) threads the bilayer. Over 173 to 191 (RFCILGKESFYDTFHTVAD) the chain is Lumenal. The helical transmembrane segment at 192-212 (MMYFCQMLAVVETINAAIGVT) threads the bilayer. Topologically, residues 213–214 (TS) are cytoplasmic. The helical transmembrane segment at 215-235 (PVLPSLIQLLGRNFILFIIFG) threads the bilayer. Residues 236–244 (TMEEMQNKA) are Lumenal-facing. The chain crosses the membrane as a helical span at residues 245–265 (VVFFVFYLWSAIEIFRYSFYM). The Cytoplasmic segment spans residues 266-282 (LTCIDMDWEVLTWLRYT). A helical membrane pass occupies residues 283 to 303 (LWIPLYPLGCLAEAVSVVQSI). Active-site residues include tyrosine 288 and glutamate 295. Topologically, residues 304 to 324 (PIFNETGRFSFTLPYPVKIKV) are lumenal. Residues 325-345 (RFSFFLQIYLIMIFLGLYINF) traverse the membrane as a helical segment. Topologically, residues 346–364 (RHLYKQRRRRYGQKKKKIH) are cytoplasmic.

It belongs to the very long-chain fatty acids dehydratase HACD family. May interact with enzymes of the ELO family (including ELOVL1); with those enzymes that mediate condensation, the first of the four steps of the reaction cycle responsible for fatty acids elongation, may be part of a larger fatty acids elongase complex. Interacts with RAC1.

It is found in the endoplasmic reticulum membrane. It carries out the reaction a very-long-chain (3R)-3-hydroxyacyl-CoA = a very-long-chain (2E)-enoyl-CoA + H2O. It catalyses the reaction (3R)-hydroxyhexadecanoyl-CoA = (2E)-hexadecenoyl-CoA + H2O. The protein operates within lipid metabolism; fatty acid biosynthesis. Its function is as follows. Catalyzes the third of the four reactions of the long-chain fatty acids elongation cycle. This endoplasmic reticulum-bound enzymatic process, allows the addition of two carbons to the chain of long- and very long-chain fatty acids/VLCFAs per cycle. This enzyme catalyzes the dehydration of the 3-hydroxyacyl-CoA intermediate into trans-2,3-enoyl-CoA, within each cycle of fatty acid elongation. Thereby, it participates in the production of VLCFAs of different chain lengths that are involved in multiple biological processes as precursors of membrane lipids and lipid mediators. Involved in Rac1-signaling pathways leading to the modulation of gene expression. The chain is Very-long-chain (3R)-3-hydroxyacyl-CoA dehydratase 3 from Pongo abelii (Sumatran orangutan).